The primary structure comprises 560 residues: Membrane protein insertase YidC (560 aa).

Residues 1–21 (MDIKRTILIAALAVVSYVMVL) traverse the membrane as a helical segment. The tract at residues 42 to 66 (VAPGLPDGVPAGNNGASADVPSANA) is disordered. Transmembrane regions (helical) follow at residues 341-361 (LELTVDYGFLWFIAQPIFWLL), 367-387 (LLGNWGWSIIVLTMLIKGLFF), 437-457 (LGGCLPILVQMPVFLALYWVL), 468-488 (WMLWITDLSIKDPFFILPIIM), and 515-535 (PIIFTFFFLWFPAGLVLYWVV).

It belongs to the OXA1/ALB3/YidC family. Type 1 subfamily. As to quaternary structure, interacts with the Sec translocase complex via SecD. Specifically interacts with transmembrane segments of nascent integral membrane proteins during membrane integration.

It localises to the cell inner membrane. Functionally, required for the insertion and/or proper folding and/or complex formation of integral membrane proteins into the membrane. Involved in integration of membrane proteins that insert both dependently and independently of the Sec translocase complex, as well as at least some lipoproteins. Aids folding of multispanning membrane proteins. The protein is Membrane protein insertase YidC of Pseudomonas putida (strain GB-1).